The following is a 1118-amino-acid chain: Collagenase ColG (1118 aa).

An N-terminal signal peptide occupies residues 1-45; it reads MKKNILKILMDSYSKESKIQTVRRVTSVSLLAVYLTMNTSSLVLA. Positions 46 to 110 are excised as a propeptide; sequence KPIENTNDTS…KSKSTLRSAS (65 aa). The tract at residues 111 to 786 is S1 metalloprotease domain, degrades both FALGPA (furylacryloyl-Leu-Gly-Pro-Ala) and type I collagen; that stretch reads IANTNSEKYD…QYDVVFHGVL (676 aa). An activator domain required for full activity on collagen region spans residues 119-388; the sequence is YDFEYLNGLS…AMERITWDYD (270 aa). Residues 389–670 are catalytic subdomain; it reads GIGSNGKKVD…IQELADKYQG (282 aa). A degrades soluble FALGPA peptide (furylacryloyl-Leu-Gly-Pro-Ala) but not type I collagen region spans residues 396-1118; that stretch reads KVDHDKFLDD…SGNYELRVNK (723 aa). Glutamate 498 provides a ligand contact to Ca(2+). Histidine 523 is a Zn(2+) binding site. Glutamate 524 is an active-site residue. Histidine 527 contacts Zn(2+). 3 residues coordinate Ca(2+): alanine 531, valine 535, and glycine 537. Glutamate 555 is a binding site for Zn(2+). A helper subdomain region spans residues 679–790; that stretch reads DYLKDHGYKK…VFHGVLTDNA (112 aa). The S2 domain stretch occupies residues 787 to 882; the sequence is TDNADISNNK…SFTIEIKNED (96 aa). 20 residues coordinate Ca(2+): asparagine 795, lysine 796, aspartate 823, aspartate 825, aspartate 864, glutamate 890, glutamate 892, asparagine 894, aspartate 913, aspartate 918, alanine 920, aspartate 921, glutamate 1009, glutamate 1011, asparagine 1013, aspartate 1014, serine 1032, aspartate 1037, arginine 1039, and aspartate 1040. A PKD domain is found at 797–885; it reads APIAKVTGPS…IEIKNEDTTT (89 aa). The interval 886–1003 is S3a collagen-binding domain; it reads PITKEMEPND…SYSLNIKGLG (118 aa). Positions 1008–1118 are S3b collagen-binding domain; that stretch reads KEKENNDSSD…SGNYELRVNK (111 aa). The collagen-binding stretch occupies residues 1102-1106; that stretch reads LVYKY.

This sequence belongs to the peptidase M9B family. Collagenase subfamily. Ca(2+) is required as a cofactor. It depends on Zn(2+) as a cofactor. Post-translationally, upon purification gives 67 kDa, 78 kDa, 82 kDa and 116 kDa (full-length) proteins all of which have the same N-terminus; only the longest form digests insoluble collagen. At least 2 in vivo isolated forms (C1b and C1c) are missing the second collagen-binding domain, ending on Lys-1006 and Lys-1018 respectively.

The protein localises to the secreted. The catalysed reaction is Digestion of native collagen in the triple helical region at Xaa-|-Gly bonds. With synthetic peptides, a preference is shown for Gly at P3 and P1', Pro and Ala at P2 and P2', and hydroxyproline, Ala or Arg at P3'.. Inhibited by 1-10-phenanthroline. Inhibited by peptidomimetic isoamyl-phosphonyl-Gly-Pro-Ala, which binds to Zn(2+). Inhibited by broad-spectrum zinc metalloprotease inhibitor batimastat. N-aryl mercaptoacetamide-based inhibitors have been isolated that act on clostridial collagenases with submicromolar affinity while having negligibile activity on human collagenases. Its function is as follows. Clostridial collagenases are among the most efficient degraders of eukaryotic collagen known; saprophytes use collagen as a carbon source while pathogens additionally digest collagen to aid in host colonization. Has both tripeptidylcarboxypeptidase on Gly-X-Y and endopeptidase activities; the endopeptidase cuts within the triple helix region of collagen while tripeptidylcarboxypeptidase successively digests the exposed ends, thus clostridial collagenases can digest large sections of collagen. Active on soluble type I collagen, insoluble collagen, azocoll, soluble PZ-peptide (all collagenase substrates) and gelatin. The full-length protein has collagenase activity, while the in vivo derived C-terminally truncated shorter versions only act on gelatin. In vitro digestion of soluble calf skin collagen fibrils requires both ColG and ColH; ColG forms missing the second collagen-binding domain are also synergistic with ColH, although their overall efficiency is decreased. The activator domain (residues 119-388) and catalytic subdomain (389-670) open and close around substrate using a Gly-rich hinge (387-397), allowing digestion when the protein is closed. Binding of collagen requires Ca(2+) and is inhibited by EGTA; the collagen-binding domain (CBD, S3a plus S3b) specifically recognizes the triple-helical conformation made by 3 collagen protein chains in the triple-helical region. Isolated CBD (S3a plus S3b) binds collagen fibrils and sheets of many tissues. The chain is Collagenase ColG from Hathewaya histolytica (Clostridium histolyticum).